Reading from the N-terminus, the 430-residue chain is 3-phosphoshikimate 1-carboxyvinyltransferase (430 aa).

3-phosphoshikimate contacts are provided by Lys21, Ser22, and Arg26. Lys21 provides a ligand contact to phosphoenolpyruvate. Gly95 and Arg123 together coordinate phosphoenolpyruvate. The 3-phosphoshikimate site is built by Thr167, Gln169, Asp315, and Lys342. Gln169 provides a ligand contact to phosphoenolpyruvate. The Proton acceptor role is filled by Asp315. The phosphoenolpyruvate site is built by Arg346 and Arg390.

This sequence belongs to the EPSP synthase family. Monomer.

The protein resides in the cytoplasm. The enzyme catalyses 3-phosphoshikimate + phosphoenolpyruvate = 5-O-(1-carboxyvinyl)-3-phosphoshikimate + phosphate. It participates in metabolic intermediate biosynthesis; chorismate biosynthesis; chorismate from D-erythrose 4-phosphate and phosphoenolpyruvate: step 6/7. In terms of biological role, catalyzes the transfer of the enolpyruvyl moiety of phosphoenolpyruvate (PEP) to the 5-hydroxyl of shikimate-3-phosphate (S3P) to produce enolpyruvyl shikimate-3-phosphate and inorganic phosphate. The protein is 3-phosphoshikimate 1-carboxyvinyltransferase of Endomicrobium trichonymphae.